The following is a 358-amino-acid chain: UDP-3-O-acylglucosamine N-acyltransferase (358 aa).

Catalysis depends on H252, which acts as the Proton acceptor.

The protein belongs to the transferase hexapeptide repeat family. LpxD subfamily. Homotrimer.

The catalysed reaction is a UDP-3-O-[(3R)-3-hydroxyacyl]-alpha-D-glucosamine + a (3R)-hydroxyacyl-[ACP] = a UDP-2-N,3-O-bis[(3R)-3-hydroxyacyl]-alpha-D-glucosamine + holo-[ACP] + H(+). Its pathway is bacterial outer membrane biogenesis; LPS lipid A biosynthesis. Catalyzes the N-acylation of UDP-3-O-acylglucosamine using 3-hydroxyacyl-ACP as the acyl donor. Is involved in the biosynthesis of lipid A, a phosphorylated glycolipid that anchors the lipopolysaccharide to the outer membrane of the cell. The protein is UDP-3-O-acylglucosamine N-acyltransferase of Paraburkholderia phymatum (strain DSM 17167 / CIP 108236 / LMG 21445 / STM815) (Burkholderia phymatum).